A 402-amino-acid polypeptide reads, in one-letter code: Deoxyguanosinetriphosphate triphosphohydrolase-like protein (402 aa).

The 149-residue stretch at R69–D217 folds into the HD domain.

Belongs to the dGTPase family. Type 2 subfamily.

This is Deoxyguanosinetriphosphate triphosphohydrolase-like protein from Bradyrhizobium diazoefficiens (strain JCM 10833 / BCRC 13528 / IAM 13628 / NBRC 14792 / USDA 110).